A 171-amino-acid polypeptide reads, in one-letter code: Small ribosomal subunit protein uS13 (171 aa).

The segment at His128–Glu171 is disordered. Residues Gln160–Glu171 show a composition bias toward acidic residues.

This sequence belongs to the universal ribosomal protein uS13 family. Part of the 30S ribosomal subunit. Forms a loose heterodimer with protein S19. Forms two bridges to the 50S subunit in the 70S ribosome.

Located at the top of the head of the 30S subunit, it contacts several helices of the 16S rRNA. In the 70S ribosome it contacts the 23S rRNA (bridge B1a) and protein L5 of the 50S subunit (bridge B1b), connecting the 2 subunits; these bridges are implicated in subunit movement. The protein is Small ribosomal subunit protein uS13 of Halobacterium salinarum (strain ATCC 700922 / JCM 11081 / NRC-1) (Halobacterium halobium).